A 380-amino-acid polypeptide reads, in one-letter code: Succinyl-diaminopimelate desuccinylase (380 aa).

His-71 contributes to the Zn(2+) binding site. Asp-73 is a catalytic residue. Position 104 (Asp-104) interacts with Zn(2+). The active-site Proton acceptor is the Glu-136. Positions 137, 166, and 351 each coordinate Zn(2+).

The protein belongs to the peptidase M20A family. DapE subfamily. In terms of assembly, homodimer. Zn(2+) is required as a cofactor. Co(2+) serves as cofactor.

The enzyme catalyses N-succinyl-(2S,6S)-2,6-diaminopimelate + H2O = (2S,6S)-2,6-diaminopimelate + succinate. It participates in amino-acid biosynthesis; L-lysine biosynthesis via DAP pathway; LL-2,6-diaminopimelate from (S)-tetrahydrodipicolinate (succinylase route): step 3/3. Catalyzes the hydrolysis of N-succinyl-L,L-diaminopimelic acid (SDAP), forming succinate and LL-2,6-diaminopimelate (DAP), an intermediate involved in the bacterial biosynthesis of lysine and meso-diaminopimelic acid, an essential component of bacterial cell walls. The chain is Succinyl-diaminopimelate desuccinylase from Ehrlichia canis (strain Jake).